Here is a 194-residue protein sequence, read N- to C-terminus: Protein GrpE (194 aa).

Residues 1-39 form a disordered region; sequence MTNHEQDQQDNSELLDDDQVTLESQQAADSGAEAPASDD. Positions 8–20 are enriched in acidic residues; it reads QQDNSELLDDDQV.

Belongs to the GrpE family. Homodimer.

The protein resides in the cytoplasm. Participates actively in the response to hyperosmotic and heat shock by preventing the aggregation of stress-denatured proteins, in association with DnaK and GrpE. It is the nucleotide exchange factor for DnaK and may function as a thermosensor. Unfolded proteins bind initially to DnaJ; upon interaction with the DnaJ-bound protein, DnaK hydrolyzes its bound ATP, resulting in the formation of a stable complex. GrpE releases ADP from DnaK; ATP binding to DnaK triggers the release of the substrate protein, thus completing the reaction cycle. Several rounds of ATP-dependent interactions between DnaJ, DnaK and GrpE are required for fully efficient folding. The sequence is that of Protein GrpE from Saccharophagus degradans (strain 2-40 / ATCC 43961 / DSM 17024).